A 322-amino-acid polypeptide reads, in one-letter code: tRNA U34 carboxymethyltransferase (322 aa).

Carboxy-S-adenosyl-L-methionine contacts are provided by residues K90, W104, K109, G129, 151–153 (DPT), 180–181 (IE), M195, Y199, and R314.

It belongs to the class I-like SAM-binding methyltransferase superfamily. CmoB family. As to quaternary structure, homotetramer.

It catalyses the reaction carboxy-S-adenosyl-L-methionine + 5-hydroxyuridine(34) in tRNA = 5-carboxymethoxyuridine(34) in tRNA + S-adenosyl-L-homocysteine + H(+). In terms of biological role, catalyzes carboxymethyl transfer from carboxy-S-adenosyl-L-methionine (Cx-SAM) to 5-hydroxyuridine (ho5U) to form 5-carboxymethoxyuridine (cmo5U) at position 34 in tRNAs. The polypeptide is tRNA U34 carboxymethyltransferase (Citrobacter koseri (strain ATCC BAA-895 / CDC 4225-83 / SGSC4696)).